A 117-amino-acid polypeptide reads, in one-letter code: uncharacterized protein (117 aa).

A signal peptide spans Met-1–Ser-22.

This is an uncharacterized protein from Escherichia coli O6:H1 (strain CFT073 / ATCC 700928 / UPEC).